We begin with the raw amino-acid sequence, 384 residues long: Urea transporter 1 (384 aa).

Positions Met-1 to Arg-23 are disordered. Helical transmembrane passes span Ile-61–Leu-81, Pro-85–Leu-105, Ala-111–Tyr-131, Phe-138–Ala-158, and Pro-169–Phe-189. An N-linked (GlcNAc...) asparagine glycan is attached at Asn-206. A run of 3 helical transmembrane segments spans residues Gly-237 to Ile-257, Gly-279 to Leu-299, and Val-327 to Leu-347.

Belongs to the urea transporter family. As to quaternary structure, homotrimer; each subunit contains a pore through which urea permeates. Identified in a complex with STOM.

The protein localises to the cell membrane. The protein resides in the basolateral cell membrane. The catalysed reaction is urea(in) = urea(out). Functionally, mediates the transport of urea driven by a concentration gradient across the cell membranes of erythrocytes and the renal inner medullary collecting duct which is critical to the urinary concentrating mechanism. Facilitates water transport in erythrocytes. The protein is Urea transporter 1 (SLC14A1) of Ovis aries (Sheep).